An 829-amino-acid polypeptide reads, in one-letter code: Periplasmic nitrate reductase (829 aa).

The signal sequence occupies residues 1 to 30; the sequence is MNSPRPTPPPFAAAAAGLPILVRASNLVTE. Residues 36 to 92 form the 4Fe-4S Mo/W bis-MGD-type domain; that stretch reads LVWNKAPCRFCGTGCSVMVATRDGQVVATHGDIKAEVNRGINCVKGYFLSKIMYGSD. [4Fe-4S] cluster contacts are provided by cysteine 43, cysteine 46, cysteine 50, and cysteine 78. Mo-bis(molybdopterin guanine dinucleotide) contacts are provided by residues lysine 80, glutamine 147, asparagine 172, cysteine 176, 209–216, 240–244, 259–261, methionine 370, glutamine 374, asparagine 480, 506–507, lysine 529, aspartate 556, and 716–725; these read WGSNMAEM, STFEH, QTD, SD, and TGRVLEHWHT. Phenylalanine 792 contacts substrate. 2 residues coordinate Mo-bis(molybdopterin guanine dinucleotide): asparagine 800 and lysine 817.

Belongs to the prokaryotic molybdopterin-containing oxidoreductase family. NasA/NapA/NarB subfamily. In terms of assembly, component of the periplasmic nitrate reductase NapAB complex composed of NapA and NapB. It depends on [4Fe-4S] cluster as a cofactor. The cofactor is Mo-bis(molybdopterin guanine dinucleotide).

The protein resides in the periplasm. The enzyme catalyses 2 Fe(II)-[cytochrome] + nitrate + 2 H(+) = 2 Fe(III)-[cytochrome] + nitrite + H2O. Catalytic subunit of the periplasmic nitrate reductase complex NapAB. Receives electrons from NapB and catalyzes the reduction of nitrate to nitrite. The sequence is that of Periplasmic nitrate reductase from Pseudomonas aeruginosa (strain ATCC 15692 / DSM 22644 / CIP 104116 / JCM 14847 / LMG 12228 / 1C / PRS 101 / PAO1).